Here is a 501-residue protein sequence, read N- to C-terminus: L-arabinose isomerase (501 aa).

Positions 307, 334, 351, and 450 each coordinate Mn(2+).

The protein belongs to the arabinose isomerase family. Mn(2+) serves as cofactor.

It carries out the reaction beta-L-arabinopyranose = L-ribulose. The protein operates within carbohydrate degradation; L-arabinose degradation via L-ribulose; D-xylulose 5-phosphate from L-arabinose (bacterial route): step 1/3. Functionally, catalyzes the conversion of L-arabinose to L-ribulose. The sequence is that of L-arabinose isomerase from Acidothermus cellulolyticus (strain ATCC 43068 / DSM 8971 / 11B).